A 211-amino-acid chain; its full sequence is Protein-methionine-sulfoxide reductase heme-binding subunit MsrQ (211 aa).

6 helical membrane passes run 10–30, 54–74, 82–102, 116–136, 153–173, and 178–198; these read WLKV…VWAI, FLLA…PLLI, LWCF…ELGV, PYLT…FTST, FVYL…KIIS, and IYAG…LSLF.

Belongs to the MsrQ family. In terms of assembly, heterodimer of a catalytic subunit (MsrP) and a heme-binding subunit (MsrQ). FMN is required as a cofactor. It depends on heme b as a cofactor.

It is found in the cell inner membrane. Part of the MsrPQ system that repairs oxidized periplasmic proteins containing methionine sulfoxide residues (Met-O), using respiratory chain electrons. Thus protects these proteins from oxidative-stress damage caused by reactive species of oxygen and chlorine generated by the host defense mechanisms. MsrPQ is essential for the maintenance of envelope integrity under bleach stress, rescuing a wide series of structurally unrelated periplasmic proteins from methionine oxidation, including the primary periplasmic chaperone SurA and the lipoprotein Pal. MsrQ provides electrons for reduction to the reductase catalytic subunit MsrP, using the quinone pool of the respiratory chain. The protein is Protein-methionine-sulfoxide reductase heme-binding subunit MsrQ of Escherichia coli O6:H1 (strain CFT073 / ATCC 700928 / UPEC).